A 243-amino-acid chain; its full sequence is MFPPAMAGYDRAITIFSPEGKIYQVEYAGEAVKRGWPTVGVKCKAGVVLTAEKRKISALFDSSSLEKIYLIDEHVAASPSGLLADARILIDYARDVALSHRFIYDEPIDVEFLTKAVCNLKQQYTQFGGARPFGVALLIAGVDRHGARLYQTDPSGVYIGYFATAIGAESGTITEFLEKNYKFDMEMGECIELALKALASAVEITDSANVEVAYATIEEKKMRKMSQDEVASLLTKLGLLKKS.

Belongs to the peptidase T1A family. As to quaternary structure, the 20S proteasome core is composed of 14 alpha and 14 beta subunits that assemble into four stacked heptameric rings, resulting in a barrel-shaped structure. The two inner rings, each composed of seven catalytic beta subunits, are sandwiched by two outer rings, each composed of seven alpha subunits. The catalytic chamber with the active sites is on the inside of the barrel. Has a gated structure, the ends of the cylinder being occluded by the N-termini of the alpha-subunits. Is capped at one or both ends by the proteasome regulatory ATPase, PAN.

The protein resides in the cytoplasm. The formation of the proteasomal ATPase PAN-20S proteasome complex, via the docking of the C-termini of PAN into the intersubunit pockets in the alpha-rings, triggers opening of the gate for substrate entry. Interconversion between the open-gate and close-gate conformations leads to a dynamic regulation of the 20S proteasome proteolysis activity. Component of the proteasome core, a large protease complex with broad specificity involved in protein degradation. The polypeptide is Proteasome subunit alpha (Pyrobaculum aerophilum (strain ATCC 51768 / DSM 7523 / JCM 9630 / CIP 104966 / NBRC 100827 / IM2)).